A 174-amino-acid chain; its full sequence is Endoribonuclease YbeY (174 aa).

Zn(2+) contacts are provided by His-124, His-128, and His-134.

Belongs to the endoribonuclease YbeY family. Zn(2+) is required as a cofactor.

The protein resides in the cytoplasm. Functionally, single strand-specific metallo-endoribonuclease involved in late-stage 70S ribosome quality control and in maturation of the 3' terminus of the 16S rRNA. This Synechococcus elongatus (strain ATCC 33912 / PCC 7942 / FACHB-805) (Anacystis nidulans R2) protein is Endoribonuclease YbeY.